The following is a 484-amino-acid chain: DRNPLEECFRETDYEEFLEIARNGLKKTSNPKHVVVVGAGMSGLSAAYVLAGAGHKVTVLEASERAGGRVRTHRNSKEGWYANLGPMRIPEKHRIVREYIRKFGLNLNEFSQENDNAWYFIKNIRKRVGEVNKDPGLLKYPVKPSEEGKSAGQLYEESLGSAVKDLKRTNCSYILNKYDTYSTKEYLIKEGNLSPGAVDMIGDLLNEDSGYYVSFIESLKHDDIFAYEKRFDEIVGGMDQLPTSMYRAIEEKVKFNARVIKIQQNANQVTVTYQTPEKDTSSNTADYVIVCTTSRAARRIQFEPPLPPKKQHALRSVHYRSGTKIFLTCSSKFWEDDGIHGGKSTTDLPSRFIYYPNHNFSTGVGVIIAYGIGDDANFFQALKFKDCADIVFNDLSLIHQLPKEEIQSFCYPSMIQKWSLDKYAMGAITTFTPYQFQRFSEALTAPQGRIFFAGEYTAEAHGWIDSTIKSGLTAARDVNRASEQ.

Cysteine 8 and cysteine 171 are disulfide-bonded. FAD-binding positions include 41–42 (MS), 61–62 (EA), and arginine 69. Residue histidine 73 participates in Zn(2+) binding. Position 85–88 (85–88 (GPMR)) interacts with FAD. Arginine 88 lines the substrate pocket. An N-linked (GlcNAc...) asparagine glycan is attached at asparagine 170. Residue histidine 221 coordinates substrate. FAD is bound at residue valine 259. Glutamate 277 lines the Zn(2+) pocket. Cysteine 329 and cysteine 410 are oxidised to a cystine. Residue tyrosine 370 coordinates substrate. Residues glutamate 455 and 462 to 467 (GWIDST) contribute to the FAD site. 462 to 463 (GW) provides a ligand contact to substrate.

The protein belongs to the flavin monoamine oxidase family. FIG1 subfamily. Homodimer; non-covalently linked. It depends on FAD as a cofactor. As to expression, expressed by the venom gland.

The protein localises to the secreted. It carries out the reaction an L-alpha-amino acid + O2 + H2O = a 2-oxocarboxylate + H2O2 + NH4(+). Catalyzes an oxidative deamination of predominantly hydrophobic and aromatic L-amino acids, thus producing hydrogen peroxide that may contribute to the diverse toxic effects of this enzyme. Exhibits diverse biological activities, such as hemorrhage, hemolysis, edema, apoptosis of vascular endothelial cells or tumor cell lines, antibacterial and antiparasitic activities, as well as regulation of platelet aggregation. Effects of snake L-amino oxidases on platelets are controversial, since they either induce aggregation or inhibit agonist-induced aggregation. These different effects are probably due to different experimental conditions. This is L-amino-acid oxidase from Vipera ammodytes ammodytes (Western sand viper).